A 116-amino-acid polypeptide reads, in one-letter code: Large ribosomal subunit protein uL22 (116 aa).

The protein belongs to the universal ribosomal protein uL22 family. Part of the 50S ribosomal subunit.

This protein binds specifically to 23S rRNA; its binding is stimulated by other ribosomal proteins, e.g. L4, L17, and L20. It is important during the early stages of 50S assembly. It makes multiple contacts with different domains of the 23S rRNA in the assembled 50S subunit and ribosome. Functionally, the globular domain of the protein is located near the polypeptide exit tunnel on the outside of the subunit, while an extended beta-hairpin is found that lines the wall of the exit tunnel in the center of the 70S ribosome. This Orientia tsutsugamushi (strain Boryong) (Rickettsia tsutsugamushi) protein is Large ribosomal subunit protein uL22.